The sequence spans 211 residues: Mediator of RNA polymerase II transcription subunit 20 (211 aa).

The protein belongs to the Mediator complex subunit 20 family. As to quaternary structure, component of the Mediator complex.

It is found in the nucleus. Component of the Mediator complex, a coactivator involved in the regulated transcription of nearly all RNA polymerase II-dependent genes. Mediator functions as a bridge to convey information from gene-specific regulatory proteins to the basal RNA polymerase II transcription machinery. Mediator is recruited to promoters by direct interactions with regulatory proteins and serves as a scaffold for the assembly of a functional preinitiation complex with RNA polymerase II and the general transcription factors. The chain is Mediator of RNA polymerase II transcription subunit 20 (med20) from Xenopus laevis (African clawed frog).